The following is a 307-amino-acid chain: Thiamine-monophosphate kinase (307 aa).

Aspartate 26, threonine 37, threonine 38, and aspartate 39 together coordinate Mg(2+). Substrate is bound at residue histidine 46. 2 residues coordinate Mg(2+): aspartate 68 and aspartate 117. Residues 116-117 and arginine 140 each bind ATP; that span reads GD. A Mg(2+)-binding site is contributed by aspartate 207. An ATP-binding site is contributed by threonine 209. Aspartate 210 lines the Mg(2+) pocket. Substrate-binding residues include glutamate 254 and phenylalanine 304.

Belongs to the thiamine-monophosphate kinase family.

The catalysed reaction is thiamine phosphate + ATP = thiamine diphosphate + ADP. Its pathway is cofactor biosynthesis; thiamine diphosphate biosynthesis; thiamine diphosphate from thiamine phosphate: step 1/1. Its function is as follows. Catalyzes the ATP-dependent phosphorylation of thiamine-monophosphate (TMP) to form thiamine-pyrophosphate (TPP), the active form of vitamin B1. This is Thiamine-monophosphate kinase from Leptospira interrogans serogroup Icterohaemorrhagiae serovar Lai (strain 56601).